Here is a 497-residue protein sequence, read N- to C-terminus: Glucose-6-phosphate 1-dehydrogenase (497 aa).

Residues 17–24, Arg-51, and Lys-151 contribute to the NADP(+) site; that span reads GASGDLAK. D-glucose 6-phosphate is bound by residues Lys-151, 181–185, Glu-219, and Asp-238; that span reads HYLGK. Catalysis depends on His-243, which acts as the Proton acceptor. An NADP(+)-binding site is contributed by Lys-334. D-glucose 6-phosphate is bound by residues Lys-337 and Arg-342. NADP(+)-binding residues include Lys-343, Arg-347, and Arg-371. Residue Gln-373 coordinates D-glucose 6-phosphate. Residues 379 to 381, 399 to 401, Arg-465, and Trp-487 contribute to the NADP(+) site; these read YLK and DLS.

This sequence belongs to the glucose-6-phosphate dehydrogenase family.

Its subcellular location is the cytoplasm. It localises to the cytosol. The catalysed reaction is D-glucose 6-phosphate + NADP(+) = 6-phospho-D-glucono-1,5-lactone + NADPH + H(+). It functions in the pathway carbohydrate degradation; pentose phosphate pathway; D-ribulose 5-phosphate from D-glucose 6-phosphate (oxidative stage): step 1/3. Functionally, cytosolic glucose-6-phosphate dehydrogenase that catalyzes the first and rate-limiting step of the oxidative branch within the pentose phosphate pathway/shunt, an alternative route to glycolysis for the dissimilation of carbohydrates and a major source of reducing power and metabolic intermediates for fatty acid and nucleic acid biosynthetic processes. The chain is Glucose-6-phosphate 1-dehydrogenase (g6pd-1) from Dictyostelium discoideum (Social amoeba).